A 428-amino-acid polypeptide reads, in one-letter code: Enolase 1 (428 aa).

A (2R)-2-phosphoglycerate-binding site is contributed by Q167. Catalysis depends on E209, which acts as the Proton donor. D246, E288, and D315 together coordinate Mg(2+). The (2R)-2-phosphoglycerate site is built by K340, R369, S370, and K391. Catalysis depends on K340, which acts as the Proton acceptor.

Belongs to the enolase family. In terms of assembly, component of the RNA degradosome, a multiprotein complex involved in RNA processing and mRNA degradation. Requires Mg(2+) as cofactor.

The protein localises to the cytoplasm. Its subcellular location is the secreted. It is found in the cell surface. The enzyme catalyses (2R)-2-phosphoglycerate = phosphoenolpyruvate + H2O. The protein operates within carbohydrate degradation; glycolysis; pyruvate from D-glyceraldehyde 3-phosphate: step 4/5. Functionally, catalyzes the reversible conversion of 2-phosphoglycerate (2-PG) into phosphoenolpyruvate (PEP). It is essential for the degradation of carbohydrates via glycolysis. This Pseudomonas syringae pv. tomato (strain ATCC BAA-871 / DC3000) protein is Enolase 1.